We begin with the raw amino-acid sequence, 205 residues long: Imidazole glycerol phosphate synthase subunit HisH (205 aa).

The region spanning 1–205 is the Glutamine amidotransferase type-1 domain; sequence MIALVDYGGG…FFKMALGDKK (205 aa). Catalysis depends on Cys-79, which acts as the Nucleophile. Catalysis depends on residues His-181 and Glu-183.

Heterodimer of HisH and HisF.

The protein localises to the cytoplasm. It catalyses the reaction 5-[(5-phospho-1-deoxy-D-ribulos-1-ylimino)methylamino]-1-(5-phospho-beta-D-ribosyl)imidazole-4-carboxamide + L-glutamine = D-erythro-1-(imidazol-4-yl)glycerol 3-phosphate + 5-amino-1-(5-phospho-beta-D-ribosyl)imidazole-4-carboxamide + L-glutamate + H(+). The catalysed reaction is L-glutamine + H2O = L-glutamate + NH4(+). The protein operates within amino-acid biosynthesis; L-histidine biosynthesis; L-histidine from 5-phospho-alpha-D-ribose 1-diphosphate: step 5/9. Its function is as follows. IGPS catalyzes the conversion of PRFAR and glutamine to IGP, AICAR and glutamate. The HisH subunit catalyzes the hydrolysis of glutamine to glutamate and ammonia as part of the synthesis of IGP and AICAR. The resulting ammonia molecule is channeled to the active site of HisF. In Dehalococcoides mccartyi (strain CBDB1), this protein is Imidazole glycerol phosphate synthase subunit HisH.